A 266-amino-acid polypeptide reads, in one-letter code: Energy-coupling factor transporter transmembrane protein EcfT (266 aa).

A run of 7 helical transmembrane segments spans residues 26–46 (VIAT…RSVT), 47–67 (LAGL…HYIL), 69–89 (GIKP…LSTP), 116–136 (LIWL…IALT), 151–171 (LPVH…PTLI), 192–212 (SLVA…LSAF), and 246–266 (YAVT…KKAL).

Belongs to the energy-coupling factor EcfT family. In terms of assembly, forms a stable energy-coupling factor (ECF) transporter complex composed of 2 membrane-embedded substrate-binding proteins (S component), 2 ATP-binding proteins (A component) and 2 transmembrane proteins (T component). May be able to interact with more than 1 S component at a time.

The protein localises to the cell membrane. Transmembrane (T) component of an energy-coupling factor (ECF) ABC-transporter complex. Unlike classic ABC transporters this ECF transporter provides the energy necessary to transport a number of different substrates. This chain is Energy-coupling factor transporter transmembrane protein EcfT, found in Heliobacterium modesticaldum (strain ATCC 51547 / Ice1).